The following is a 284-amino-acid chain: 2-dehydro-3-deoxyphosphooctonate aldolase (284 aa).

It belongs to the KdsA family.

It localises to the cytoplasm. It carries out the reaction D-arabinose 5-phosphate + phosphoenolpyruvate + H2O = 3-deoxy-alpha-D-manno-2-octulosonate-8-phosphate + phosphate. It participates in carbohydrate biosynthesis; 3-deoxy-D-manno-octulosonate biosynthesis; 3-deoxy-D-manno-octulosonate from D-ribulose 5-phosphate: step 2/3. The protein operates within bacterial outer membrane biogenesis; lipopolysaccharide biosynthesis. The polypeptide is 2-dehydro-3-deoxyphosphooctonate aldolase (Edwardsiella ictaluri (strain 93-146)).